Here is a 347-residue protein sequence, read N- to C-terminus: MAAIELIDLKKNYGPVPAVKGINLTVADGEMIVLVGPSGCGKSTLLRMIAGLEVISSGHLRISGNDVGHVDPADRNIAMVFQNYALYPHMTVRQNLEYGLKNRRVPRHEINRRIADAADILEIGEFLERRPRQLSGGQRQRVAMGRAIVRDPAAFLFDEPLSNLDAKLRVRMRVEIRRLQRQLKTTSLYVTHDQLEAMTLADRLVVMNGGRIEQIGTPVEVYRRPETVFVAGFIGSPPMNLIDLDELGPSDRAFPRDTDLVGIRPGAINLGAGSAHDLRFDAHVELIETVGDENNVHLRIDDSRKRIIASVPTDRHLRESDRISCHVRMEALHPFNKSTGRRTDRSR.

Positions 4 to 234 (IELIDLKKNY…PETVFVAGFI (231 aa)) constitute an ABC transporter domain. 36-43 (GPSGCGKS) provides a ligand contact to ATP.

The protein belongs to the ABC transporter superfamily. sn-glycerol-3-phosphate importer (TC 3.A.1.1.3) family. The complex is composed of two ATP-binding proteins (UgpC), two transmembrane proteins (UgpA and UgpE) and a solute-binding protein (UgpB).

It localises to the cell inner membrane. It catalyses the reaction sn-glycerol 3-phosphate(out) + ATP + H2O = sn-glycerol 3-phosphate(in) + ADP + phosphate + H(+). In terms of biological role, part of the ABC transporter complex UgpBAEC involved in sn-glycerol-3-phosphate (G3P) import. Responsible for energy coupling to the transport system. The polypeptide is sn-glycerol-3-phosphate import ATP-binding protein UgpC 1 (Rhizobium etli (strain ATCC 51251 / DSM 11541 / JCM 21823 / NBRC 15573 / CFN 42)).